The primary structure comprises 460 residues: Photosystem II CP43 reaction center protein (460 aa).

A propeptide is located at residue Met1. The next 5 helical transmembrane spans lie at 56–80, 121–142, 165–187, 242–262, and 278–299; these read LFET…PHLA, IVGP…RDKN, KALF…RFIT, RPFS…LSYS, and WYNN…ASQA. Glu354 contributes to the [CaMn4O5] cluster binding site. Residues 434–458 form a helical membrane-spanning segment; the sequence is RARAAAAGFEKGINRENEPVLSMRP.

The protein belongs to the PsbB/PsbC family. PsbC subfamily. PSII is composed of 1 copy each of membrane proteins PsbA, PsbB, PsbC, PsbD, PsbE, PsbF, PsbH, PsbI, PsbJ, PsbK, PsbL, PsbM, PsbT, PsbY, PsbZ, Psb30/Ycf12, at least 3 peripheral proteins of the oxygen-evolving complex and a large number of cofactors. It forms dimeric complexes. Binds multiple chlorophylls and provides some of the ligands for the Ca-4Mn-5O cluster of the oxygen-evolving complex. It may also provide a ligand for a Cl- that is required for oxygen evolution. PSII binds additional chlorophylls, carotenoids and specific lipids. serves as cofactor.

Its subcellular location is the plastid. The protein localises to the chloroplast thylakoid membrane. Functionally, one of the components of the core complex of photosystem II (PSII). It binds chlorophyll and helps catalyze the primary light-induced photochemical processes of PSII. PSII is a light-driven water:plastoquinone oxidoreductase, using light energy to abstract electrons from H(2)O, generating O(2) and a proton gradient subsequently used for ATP formation. The polypeptide is Photosystem II CP43 reaction center protein (Cyanidium caldarium (Red alga)).